The sequence spans 80 residues: Serine protease inhibitor Kazal-type 1 (80 aa).

The N-terminal stretch at 1-23 (MKVAVIFLLSALALLSLAGNTFS) is a signal peptide. The Kazal-like domain maps to 27 to 80 (TGKEASCHDAVAGCPRIYDPVCGTDGITYANECVLCFENRKRIEPVLIRKGGPC). Cystine bridges form between C33-C62, C40-C59, and C48-C80.

As to expression, in the genital tract, expressed only in male accessory glands including seminal vesicle, coagulating gland and prostate.

The protein localises to the secreted. Serine protease inhibitor which exhibits anti-trypsin activity. In the pancreas, protects against trypsin-catalyzed premature activation of zymogens. Functionally, in the male reproductive tract, binds to sperm heads where it modulates sperm capacitance by inhibiting calcium uptake and nitrogen oxide (NO) production. The sequence is that of Serine protease inhibitor Kazal-type 1 from Mus musculus (Mouse).